Reading from the N-terminus, the 121-residue chain is MKKKYRIKKNEEFQEVFQRGASTANRQFVIYTLDRPEQPYFRIGLSVSKKLGKAVVRNRIKRYIRQCFLELKEEIAPGKDYVVIARQPVAEMNYAEVKKSLIHVLRKSGGLKKGGQPSHSA.

Belongs to the RnpA family. In terms of assembly, consists of a catalytic RNA component (M1 or rnpB) and a protein subunit.

It carries out the reaction Endonucleolytic cleavage of RNA, removing 5'-extranucleotides from tRNA precursor.. Functionally, RNaseP catalyzes the removal of the 5'-leader sequence from pre-tRNA to produce the mature 5'-terminus. It can also cleave other RNA substrates such as 4.5S RNA. The protein component plays an auxiliary but essential role in vivo by binding to the 5'-leader sequence and broadening the substrate specificity of the ribozyme. This is Ribonuclease P protein component from Geobacillus kaustophilus (strain HTA426).